The following is a 245-amino-acid chain: MALLPVLLFLAAVLLPFFPASGQDPGFAALSITKSEVQKEIVNKHNDLRRTVSPLASNMLKMQWDSKTATNAQNWANKCLLQHSKAEDRAVGTMKCGENLFMSSIPNSWSDAIQNWHDEVHDFKYGVGPKTPNAVVGHYTQVVWYSSYRVGCGIAYCPKQGTLKYYYVCQYCPAGNYVNKINTPYEQGTPCARCPGNCDNGLCTNSCEYEDLVSNCDSLKKIAGCEHELLKENCKTTCQCENKIY.

Positions Met1–Gly22 are cleaved as a signal peptide. The 130-residue stretch at Val42–Tyr171 folds into the SCP domain. Disulfide bonds link Cys191/Cys198, Cys194/Cys203, Cys207/Cys240, Cys216/Cys234, and Cys225/Cys238. A ShKT domain is found at Cys207–Cys240.

Belongs to the CRISP family. Interacts with A1BG. In terms of tissue distribution, expressed in the salivary gland, in the ampulla and the seminal vesicle.

The protein localises to the secreted. This chain is Cysteine-rich secretory protein 3 (CRISP3), found in Equus caballus (Horse).